A 458-amino-acid polypeptide reads, in one-letter code: Argininosuccinate lyase (458 aa).

It belongs to the lyase 1 family. Argininosuccinate lyase subfamily.

It localises to the cytoplasm. It carries out the reaction 2-(N(omega)-L-arginino)succinate = fumarate + L-arginine. It participates in amino-acid biosynthesis; L-arginine biosynthesis; L-arginine from L-ornithine and carbamoyl phosphate: step 3/3. This Anoxybacillus flavithermus (strain DSM 21510 / WK1) protein is Argininosuccinate lyase.